The primary structure comprises 372 residues: MHIESPIKRRQSTRIYVGNVPIGDGAPIAVQSMTNTRTTDVDATVAQIKSLEKVGADIVRVSVPTMDAAEAFKVIKQQVSVPLVADIHFDYRIALQVAEYGVDCLRINPGNIGNEQRIRSVVDCARDKNIPIRIGVNGGSLEKDIQAKYKEPTAEALLESAMRHVDILDRLNFDQFKVSVKASDVFLAVDSYRLLAKQIAQPLHLGITEAGGARAGSVKSAVGLGMLLSEGIGDTLRISLAADPVEEIKVGFDILKSLRIRSRGINFIACPTCSRQEFDVIATVNELEQRLEDLITPMDVSLIGCVVNGPGEAEVSHMGIAGSNRKSAFYEDGVRQKERFDNDNIVDQLEAKIRAKAATLSKENQIDINQID.

[4Fe-4S] cluster is bound by residues Cys270, Cys273, Cys305, and Glu312.

This sequence belongs to the IspG family. [4Fe-4S] cluster is required as a cofactor.

It catalyses the reaction (2E)-4-hydroxy-3-methylbut-2-enyl diphosphate + oxidized [flavodoxin] + H2O + 2 H(+) = 2-C-methyl-D-erythritol 2,4-cyclic diphosphate + reduced [flavodoxin]. It functions in the pathway isoprenoid biosynthesis; isopentenyl diphosphate biosynthesis via DXP pathway; isopentenyl diphosphate from 1-deoxy-D-xylulose 5-phosphate: step 5/6. Its function is as follows. Converts 2C-methyl-D-erythritol 2,4-cyclodiphosphate (ME-2,4cPP) into 1-hydroxy-2-methyl-2-(E)-butenyl 4-diphosphate. The sequence is that of 4-hydroxy-3-methylbut-2-en-1-yl diphosphate synthase (flavodoxin) from Aliivibrio fischeri (strain ATCC 700601 / ES114) (Vibrio fischeri).